The chain runs to 431 residues: GDP-L-galactose phosphorylase 2 (431 aa).

Residue His-235 is the Tele-GMP-histidine intermediate of the active site. The span at 398 to 407 shows a compositional bias: acidic residues; sequence EEEEEEELEE. The disordered stretch occupies residues 398 to 417; that stretch reads EEEEEEELEEQNSMNGGSFT.

Belongs to the GDPGP1 family. As to quaternary structure, interacts with TLP1. In terms of tissue distribution, expressed in leaves, stems, roots, flowers and siliques.

It is found in the cytoplasm. The protein localises to the nucleus. The enzyme catalyses GDP-beta-L-galactose + phosphate = beta-L-galactose 1-phosphate + GDP + H(+). The protein operates within cofactor biosynthesis; L-ascorbate biosynthesis via GDP-alpha-D-mannose pathway; L-ascorbate from GDP-alpha-D-mannose: step 2/5. Its function is as follows. Catalyzes a reaction of the Smirnoff-Wheeler pathway, the major route to ascorbate biosynthesis in plants. Acts as a phosphorylase rather than as a transferase. Uses preferentially GDP-L-galactose and GDP-D-glucose as substrates. Lower activity with GDP-L-fucose, very low activity with GDP-D-mannose, and no activity with UDP-D-glucose, UDP-D-galactose or ADP-D-glucose. Highly specific for inorganic phosphate as the guanylyl acceptor. The polypeptide is GDP-L-galactose phosphorylase 2 (VTC5) (Arabidopsis thaliana (Mouse-ear cress)).